A 327-amino-acid polypeptide reads, in one-letter code: GTPase Obg (327 aa).

Positions 3 to 160 (NKFTDFIKIY…FIFVLELKIL (158 aa)) constitute an Obg domain. Residues 161-327 (ADVGLIGLPN…LIYYICNILS (167 aa)) form the OBG-type G domain. GTP is bound by residues 167–174 (GLPNSGKS), 192–196 (FTTLN), 214–217 (DIPG), 281–284 (SKSD), and 308–310 (SSF). Mg(2+)-binding residues include Ser-174 and Thr-194.

It belongs to the TRAFAC class OBG-HflX-like GTPase superfamily. OBG GTPase family. Monomer. Mg(2+) serves as cofactor.

The protein resides in the cytoplasm. Functionally, an essential GTPase which binds GTP, GDP and possibly (p)ppGpp with moderate affinity, with high nucleotide exchange rates and a fairly low GTP hydrolysis rate. Plays a role in control of the cell cycle, stress response, ribosome biogenesis and in those bacteria that undergo differentiation, in morphogenesis control. The sequence is that of GTPase Obg from Karelsulcia muelleri (strain GWSS) (Sulcia muelleri).